Reading from the N-terminus, the 448-residue chain is F-box/FBD/LRR-repeat protein At2g04230 (448 aa).

In terms of domain architecture, F-box spans 12-64 (EDRISDLPDALLLQILSSLPTENAIATSVLSKRWRSLWTMLPKLKFDSNFNPV). LRR repeat units lie at residues 72-98 (PTMF…HLSF), 149-176 (ILKL…YLDQ), 177-202 (VHFK…VVHR), 204-225 (SNAD…TIED), 226-251 (LRQE…NING), 271-296 (ISNV…ILHL), and 319-345 (THER…KLTD). The FBD domain occupies 359 to 410 (KWNPPKCAPECLLFHLETFLWIGYEWQRGDEKEVATYILENARRLKKATFST).

The protein is F-box/FBD/LRR-repeat protein At2g04230 of Arabidopsis thaliana (Mouse-ear cress).